The primary structure comprises 365 residues: Chorismate synthase (365 aa).

NADP(+)-binding residues include R48 and R54. FMN is bound by residues 131–133 (RSS), 243–244 (NA), G288, 303–307 (KPTSS), and R329.

It belongs to the chorismate synthase family. As to quaternary structure, homotetramer. The cofactor is FMNH2.

The catalysed reaction is 5-O-(1-carboxyvinyl)-3-phosphoshikimate = chorismate + phosphate. The protein operates within metabolic intermediate biosynthesis; chorismate biosynthesis; chorismate from D-erythrose 4-phosphate and phosphoenolpyruvate: step 7/7. Catalyzes the anti-1,4-elimination of the C-3 phosphate and the C-6 proR hydrogen from 5-enolpyruvylshikimate-3-phosphate (EPSP) to yield chorismate, which is the branch point compound that serves as the starting substrate for the three terminal pathways of aromatic amino acid biosynthesis. This reaction introduces a second double bond into the aromatic ring system. In Rhizobium etli (strain ATCC 51251 / DSM 11541 / JCM 21823 / NBRC 15573 / CFN 42), this protein is Chorismate synthase.